The following is a 2040-amino-acid chain: Apolipoprotein(a) (2040 aa).

The first 19 residues, 1–19 (MEHKEVVLLLLLFLKSAAP), serve as a signal peptide directing secretion. 10 consecutive Kringle domains span residues 27–105 (DCYH…LTQC), 141–219 (ECYH…LTQC), 255–333 (ECYH…LTQC), 369–447 (ECYH…LTQC), 483–561 (ECYH…LTQC), 597–675 (ECYH…LTQC), 711–789 (ECYH…LTQC), 825–903 (ECYH…LTQC), 939–1017 (ECYH…LTRC), and 1053–1131 (DCYY…LTQC). Cystine bridges form between Cys-28-Cys-105, Cys-49-Cys-88, Cys-77-Cys-100, Cys-142-Cys-219, Cys-163-Cys-202, Cys-191-Cys-214, Cys-256-Cys-333, Cys-277-Cys-316, Cys-305-Cys-328, Cys-370-Cys-447, Cys-391-Cys-430, Cys-419-Cys-442, Cys-484-Cys-561, Cys-505-Cys-544, Cys-533-Cys-556, Cys-598-Cys-675, Cys-619-Cys-658, Cys-647-Cys-670, Cys-712-Cys-789, Cys-733-Cys-772, Cys-761-Cys-784, Cys-826-Cys-903, Cys-847-Cys-886, Cys-875-Cys-898, Cys-940-Cys-1017, Cys-961-Cys-1000, Cys-989-Cys-1012, Cys-1054-Cys-1131, Cys-1075-Cys-1114, and Cys-1103-Cys-1126. N-linked (GlcNAc...) asparagine glycosylation occurs at Asn-61. Asn-101 carries an N-linked (GlcNAc...) asparagine glycan. A glycan (N-linked (GlcNAc...) asparagine) is linked at Asn-215. Asn-329 carries an N-linked (GlcNAc...) asparagine glycan. A glycan (N-linked (GlcNAc...) asparagine) is linked at Asn-443. The N-linked (GlcNAc...) asparagine glycan is linked to Asn-557. An N-linked (GlcNAc...) asparagine glycan is attached at Asn-671. N-linked (GlcNAc...) asparagine glycosylation occurs at Asn-785. N-linked (GlcNAc...) asparagine glycosylation is present at Asn-899. An N-linked (GlcNAc...) asparagine glycan is attached at Asn-1013. N-linked (GlcNAc...) asparagine glycosylation occurs at Asn-1127. The tract at residues 1147–1166 (DPSTEASSEEAPTEQSPGVQ) is disordered. Kringle domains follow at residues 1167–1245 (DCYH…LTQC) and 1273–1351 (DCYH…LTQC). Intrachain disulfides connect Cys-1168/Cys-1245, Cys-1189/Cys-1228, Cys-1217/Cys-1240, Cys-1274/Cys-1351, Cys-1295/Cys-1334, and Cys-1323/Cys-1346. Residue Asn-1241 is glycosylated (N-linked (GlcNAc...) asparagine). N-linked (GlcNAc...) asparagine glycans are attached at residues Asn-1347 and Asn-1381. Residues 1365–1388 (VPVPSTELPSEEAPTENSTGVQDC) form a disordered region. One can recognise a Kringle 13 domain in the interval 1387–1465 (DCYRGDGQSY…RWEYCNLTRC (79 aa)). 3 disulfide bridges follow: Cys-1388–Cys-1465, Cys-1409–Cys-1448, and Cys-1437–Cys-1460. An N-linked (GlcNAc...) asparagine glycan is attached at Asn-1461. The segment at 1476-1497 (PTVAPVPSTEAPSEQAPPEKSP) is disordered. Kringle domains are found at residues 1501–1579 (DCYH…LTQC), 1615–1693 (QCYH…LTRC), and 1719–1799 (DCMF…IPLC). Intrachain disulfides connect Cys-1502/Cys-1579, Cys-1523/Cys-1562, Cys-1551/Cys-1574, Cys-1616/Cys-1693, Cys-1637/Cys-1676, Cys-1665/Cys-1688, Cys-1720/Cys-1799, Cys-1741/Cys-1782, Cys-1770/Cys-1794, and Cys-1846/Cys-1862. N-linked (GlcNAc...) asparagine glycosylation occurs at Asn-1575. N-linked (GlcNAc...) asparagine glycosylation is present at Asn-1689. A Peptidase S1 domain is found at 1820-2038 (IVGGCVAHPH…FVTWIEGMMR (219 aa)). Catalysis depends on charge relay system residues His-1861 and Asp-1904. Intrachain disulfides connect Cys-1938/Cys-1996, Cys-1968/Cys-1975, and Cys-1986/Cys-2014. The active-site Charge relay system is Ser-1990.

The protein belongs to the peptidase S1 family. Plasminogen subfamily. Disulfide-linked to apo-B100. Binds to fibronectin and decorin. Post-translationally, N- and O-glycosylated. The N-glycans are complex biantennary structures present in either a mono- or disialylated state. The O-glycans are mostly (80%) represented by the monosialylated core type I structure, NeuNAcalpha2-3Galbeta1-3GalNAc, with smaller amounts of disialylated and non-sialylated O-glycans also detected.

Its function is as follows. Apo(a) is the main constituent of lipoprotein(a) (Lp(a)). It has serine proteinase activity and is able of autoproteolysis. Inhibits tissue-type plasminogen activator 1. Lp(a) may be a ligand for megalin/Gp 330. This is Apolipoprotein(a) (LPA) from Homo sapiens (Human).